A 469-amino-acid polypeptide reads, in one-letter code: Glutamine synthetase (469 aa).

Positions 15–96 (EDVKFIDVRF…INFFIHDPIT (82 aa)) constitute a GS beta-grasp domain. Positions 104–469 (PRNVAKKAEA…PYEYEQYYDV (366 aa)) constitute a GS catalytic domain. The Mg(2+) site is built by glutamate 129 and glutamate 131. Residue glutamate 205 participates in ATP binding. Residues glutamate 210 and glutamate 218 each contribute to the Mg(2+) site. An ATP-binding site is contributed by 221–223 (YKF). Residues 262–263 (NG) and glycine 263 each bind L-glutamate. Histidine 267 is a Mg(2+) binding site. ATP contacts are provided by residues 269 to 271 (HQS) and serine 271. 3 residues coordinate L-glutamate: arginine 320, glutamate 326, and arginine 338. Residues arginine 338, arginine 343, and lysine 352 each contribute to the ATP site. Glutamate 357 provides a ligand contact to Mg(2+). Arginine 359 is a binding site for L-glutamate. Position 397 is an O-AMP-tyrosine (tyrosine 397).

The protein belongs to the glutamine synthetase family. In terms of assembly, oligomer of 12 subunits arranged in the form of two hexagons. Mg(2+) is required as a cofactor.

It localises to the cytoplasm. The enzyme catalyses L-glutamate + NH4(+) + ATP = L-glutamine + ADP + phosphate + H(+). Its activity is regulated as follows. The activity of this enzyme could be controlled by adenylation under conditions of abundant glutamine. Catalyzes the ATP-dependent biosynthesis of glutamine from glutamate and ammonia. The protein is Glutamine synthetase of Streptomyces viridochromogenes.